Consider the following 522-residue polypeptide: MSNRVIIFDTTLRDGEQALAASLSVKEKLQIAMALERLGVDVMEVGFPVSSPGDFESVQTIARTIKNSRVCALSRALEKDIDAAAQALSVAEQFRIHTFISTSTIHVESKLKRSFEQVLEMAVGAVKYARRFTDDVEFSCEDAGRTPIDNLCRMVEAAIHAGARTINIPDTVGYTVPSEFGGIIQTLFNRVPNIDQAIISVHCHDDLGMSVANSITAVQHGARQIECTMNGIGERAGNCSLEEIAMILATRKNLLGVETGINAKEIHRTSNLVSQLCNMPIQSNKAIVGANAFTHSSGIHQDGMLKAQNTYEIMTPESIGLNRNNLNMTSRSGRHVIKHRMEEMGYSEQDYNLDALYEQFLHLADKKGQVFDYDLEALAFMEAQAAEDNFYQLQQLVVQSDSTEGVATATVRIDVGGEIKTEAATGNGPVDAAYNAIARATDRRIDIISYKLGAKGEGQNALGQVDITAVYHEQNFHGVGLATDVVEASARALVHVMNLTCRADKVADYKQNMHKNRELGGV.

Residues 5–267 (VIIFDTTLRD…ETGINAKEIH (263 aa)) form the Pyruvate carboxyltransferase domain. Mn(2+) is bound by residues D14, H202, H204, and N238. The tract at residues 392-522 (QLQQLVVQSD…MHKNRELGGV (131 aa)) is regulatory domain.

It belongs to the alpha-IPM synthase/homocitrate synthase family. LeuA type 1 subfamily. As to quaternary structure, homodimer. Mn(2+) serves as cofactor.

Its subcellular location is the cytoplasm. The catalysed reaction is 3-methyl-2-oxobutanoate + acetyl-CoA + H2O = (2S)-2-isopropylmalate + CoA + H(+). It functions in the pathway amino-acid biosynthesis; L-leucine biosynthesis; L-leucine from 3-methyl-2-oxobutanoate: step 1/4. In terms of biological role, catalyzes the condensation of the acetyl group of acetyl-CoA with 3-methyl-2-oxobutanoate (2-ketoisovalerate) to form 3-carboxy-3-hydroxy-4-methylpentanoate (2-isopropylmalate). The polypeptide is 2-isopropylmalate synthase (Shewanella sp. (strain MR-4)).